A 320-amino-acid chain; its full sequence is Phospho-N-acetylmuramoyl-pentapeptide-transferase (320 aa).

The next 9 membrane-spanning stretches (helical) occupy residues 5–25 (FWAFTRAFIVTVIFMPAVIKF), 51–71 (MGGALFIAAASLSALIGSVAY), 75–95 (IGFVMVLIPILAVVAYAIIGG), 121–141 (LCAVVIMIIMWIMQIPLILNI), 143–163 (FIGVFNLGIFYFIFLWFWLVG), 176–196 (GLLTGTSLIVYLVYTWIALGV), 198–218 (NHIIVIFNASIIGALVGFLLF), 241–261 (IESIVLGIPFSLLWFGLIFVI), and 300–320 (IDALFWIVTAIIGIIGILYMS).

The protein belongs to the glycosyltransferase 4 family. MraY subfamily. Mg(2+) is required as a cofactor.

The protein localises to the cell membrane. It catalyses the reaction UDP-N-acetyl-alpha-D-muramoyl-L-alanyl-gamma-D-glutamyl-L-lysyl-D-alanyl-D-alanine + di-trans,octa-cis-undecaprenyl phosphate = Mur2Ac(oyl-L-Ala-gamma-D-Glu-L-Lys-D-Ala-D-Ala)-di-trans,octa-cis-undecaprenyl diphosphate + UMP. The protein operates within cell wall biogenesis; peptidoglycan biosynthesis. In terms of biological role, catalyzes the initial step of the lipid cycle reactions in the biosynthesis of the cell wall peptidoglycan: transfers peptidoglycan precursor phospho-MurNAc-pentapeptide from UDP-MurNAc-pentapeptide onto the lipid carrier undecaprenyl phosphate, yielding undecaprenyl-pyrophosphoryl-MurNAc-pentapeptide, known as lipid I. This Leuconostoc mesenteroides subsp. mesenteroides (strain ATCC 8293 / DSM 20343 / BCRC 11652 / CCM 1803 / JCM 6124 / NCDO 523 / NBRC 100496 / NCIMB 8023 / NCTC 12954 / NRRL B-1118 / 37Y) protein is Phospho-N-acetylmuramoyl-pentapeptide-transferase.